A 301-amino-acid chain; its full sequence is tRNA dimethylallyltransferase (301 aa).

Residue 9–16 (GPTASGKS) participates in ATP binding. 11–16 (TASGKS) is a substrate binding site. An interaction with substrate tRNA region spans residues 34–37 (DSMQ).

This sequence belongs to the IPP transferase family. As to quaternary structure, monomer. Mg(2+) is required as a cofactor.

The catalysed reaction is adenosine(37) in tRNA + dimethylallyl diphosphate = N(6)-dimethylallyladenosine(37) in tRNA + diphosphate. In terms of biological role, catalyzes the transfer of a dimethylallyl group onto the adenine at position 37 in tRNAs that read codons beginning with uridine, leading to the formation of N6-(dimethylallyl)adenosine (i(6)A). The chain is tRNA dimethylallyltransferase from Corynebacterium glutamicum (strain ATCC 13032 / DSM 20300 / JCM 1318 / BCRC 11384 / CCUG 27702 / LMG 3730 / NBRC 12168 / NCIMB 10025 / NRRL B-2784 / 534).